Reading from the N-terminus, the 366-residue chain is Heat-inducible transcription repressor HrcA (366 aa).

Residues 298-309 (SSGYGQSSTPSA) are compositionally biased toward polar residues. The interval 298-318 (SSGYGQSSTPSANVEHEEYDT) is disordered.

The protein belongs to the HrcA family.

Negative regulator of class I heat shock genes (grpE-dnaK-dnaJ and groELS operons). Prevents heat-shock induction of these operons. This chain is Heat-inducible transcription repressor HrcA, found in Bifidobacterium animalis subsp. lactis (strain AD011).